A 298-amino-acid chain; its full sequence is Epimerase family protein SSP1921 (298 aa).

Belongs to the NAD(P)-dependent epimerase/dehydratase family. SDR39U1 subfamily.

The chain is Epimerase family protein SSP1921 from Staphylococcus saprophyticus subsp. saprophyticus (strain ATCC 15305 / DSM 20229 / NCIMB 8711 / NCTC 7292 / S-41).